The sequence spans 1431 residues: Stabilin-2 (1431 aa).

At 1-1322 the chain is on the extracellular side; that stretch reads SLPSLLTRLE…PPTAATAAHS (1322 aa). An FAS1 domain is found at 2–130; the sequence is LPSLLTRLEQ…GVIHGLEKVL (129 aa). 2 N-linked (GlcNAc...) asparagine glycosylation sites follow: Asn112 and Asn140. Residues 207 to 272 enclose the Laminin EGF-like 1 domain; it reads PQCQACPGRG…CSCVHGRCSQ (66 aa). 18 disulfide bridges follow: Cys212–Cys226, Cys220–Cys236, Cys238–Cys247, Cys259–Cys270, Cys263–Cys280, Cys282–Cys291, Cys300–Cys310, Cys304–Cys320, Cys322–Cys333, Cys339–Cys352, Cys346–Cys362, Cys364–Cys375, Cys381–Cys394, Cys388–Cys404, Cys406–Cys417, Cys423–Cys436, Cys430–Cys446, and Cys448–Cys459. N-linked (GlcNAc...) asparagine glycans are attached at residues Asn231 and Asn243. EGF-like domains are found at residues 296–334, 335–376, 377–418, and 419–460; these read TTDN…TVCT, AINA…IVCL, EINP…KVCS, and LINV…IVCR. N-linked (GlcNAc...) asparagine glycosylation is present at Asn301. A glycan (N-linked (GlcNAc...) asparagine) is linked at Asn329. Asn437 carries an N-linked (GlcNAc...) asparagine glycan. FAS1 domains are found at residues 460-588 and 604-745; these read RGSI…DKLL and VLQN…DCLL. Residue Asn607 is glycosylated (N-linked (GlcNAc...) asparagine). The region spanning 822-887 is the Laminin EGF-like 2 domain; that stretch reads PDCQACPGGP…SCSEHGQCDE (66 aa). Disulfide bonds link Cys827-Cys841, Cys835-Cys851, Cys853-Cys862, Cys874-Cys885, Cys879-Cys895, and Cys897-Cys906. N-linked (GlcNAc...) asparagine glycosylation occurs at Asn858. The N-linked (GlcNAc...) asparagine glycan is linked to Asn929. EGF-like domains are found at residues 947-987 and 988-1030; these read VVDF…YSCI and EIDP…VDCE. 8 disulfide bridges follow: Cys951/Cys964, Cys958/Cys973, Cys975/Cys986, Cys992/Cys1006, Cys1000/Cys1016, Cys1018/Cys1029, Cys1085/Cys1154, and Cys1109/Cys1130. A Link domain is found at 1063 to 1156; it reads GVFHLRSPLG…SEMWDVFCYR (94 aa). N-linked (GlcNAc...) asparagine glycans are attached at residues Asn1145, Asn1161, Asn1233, Asn1249, and Asn1258. The 135-residue stretch at 1176 to 1310 folds into the FAS1 4 domain; that stretch reads SGNLLQVLMS…GILHIISEPL (135 aa). A helical membrane pass occupies residues 1323–1343; sequence GLGTGIFCAVVLVTGAIALAA. Residues 1344-1431 are Cytoplasmic-facing; the sequence is YSYFRLKQRT…QQATTVTVPR (88 aa). The interaction with TMSB4X stretch occupies residues 1368–1378; the sequence is WLLASSSPRIS.

Interacts with GULP1, heparin, alpha-M/beta-2 integrin (ITGAM and ITGB2), and thymosin beta 4 (TMSB4X). In terms of processing, glycosylated. Post-translationally, proteolytically processed to yield a 175 kDa protein. In terms of tissue distribution, initially expressed in all vascular cells, including those of sinusoidal-like structures, vitellin veins, and hepatic veins or sinus venosus, in E13.5 fetal liver. The expression then progressively disappears in the portal and hepatic veins, but the expression in sinusoidals endothelial cells (SECs) is retained and becomes stronger during development.

The protein resides in the cytoplasm. It is found in the cell membrane. Functionally, phosphatidylserine receptor that enhances the engulfment of apoptotic cells. Hyaluronan receptor that binds to and mediates endocytosis of hyaluronic acid (HA). Also acts, in different species, as a primary systemic scavenger receptor for heparin (Hep), chondroitin sulfate (CS), dermatan sulfate (DS), nonglycosaminoglycan (GAG), acetylated low-density lipoprotein (AcLDL), pro-collagen propeptides and advanced glycation end products (AGE). May serve to maintain tissue integrity by supporting extracellular matrix turnover or it may contribute to maintaining fluidity of bodily liquids by resorption of hyaluronan. Counter receptor which plays an important role in lymphocyte recruitment in the hepatic vasculature. Binds to both Gram-positive and Gram-negative bacteria and may play a role in defense against bacterial infection. The proteolytically processed 175 kDa form also functions as an endocytosis receptor for heparin internalization as well as HA and CS. This Rattus norvegicus (Rat) protein is Stabilin-2.